Here is a 305-residue protein sequence, read N- to C-terminus: Glutaminase (305 aa).

Substrate contacts are provided by S61, N113, E158, N165, Y189, Y241, and V259.

The protein belongs to the glutaminase family. As to quaternary structure, homotetramer.

It carries out the reaction L-glutamine + H2O = L-glutamate + NH4(+). This is Glutaminase from Clostridium botulinum (strain 657 / Type Ba4).